The following is a 245-amino-acid chain: Orotidine 5'-phosphate decarboxylase (245 aa).

Substrate contacts are provided by residues Asp-22, Lys-44, 71–80 (DLKFHDIPNT), Thr-131, Arg-192, Gln-201, Gly-221, and Arg-222. The active-site Proton donor is Lys-73.

It belongs to the OMP decarboxylase family. Type 1 subfamily. Homodimer.

It catalyses the reaction orotidine 5'-phosphate + H(+) = UMP + CO2. It participates in pyrimidine metabolism; UMP biosynthesis via de novo pathway; UMP from orotate: step 2/2. Functionally, catalyzes the decarboxylation of orotidine 5'-monophosphate (OMP) to uridine 5'-monophosphate (UMP). The sequence is that of Orotidine 5'-phosphate decarboxylase from Salmonella typhimurium (strain LT2 / SGSC1412 / ATCC 700720).